The following is a 317-amino-acid chain: RHOMBOID-like protein 2 (317 aa).

7 helical membrane-spanning segments follow: residues 33–53 (SWLI…VMFV), 118–138 (WLHA…FIGI), 149–169 (VGLI…LFLQ), 172–192 (ISVG…SELL), 202–222 (AAAL…GMLP), 224–244 (VDNF…FVLL), and 272–292 (LFVV…VMLF). Residue Ser177 is the Nucleophile of the active site. The Charge relay system role is filled by His229.

The protein belongs to the peptidase S54 family. In terms of tissue distribution, expressed in roots, seedlings, leaves, stems and flowers.

Its subcellular location is the golgi apparatus membrane. The enzyme catalyses Cleaves type-1 transmembrane domains using a catalytic dyad composed of serine and histidine that are contributed by different transmembrane domains.. Its function is as follows. Rhomboid-type serine protease that catalyzes intramembrane proteolysis. Can cleave the Drosophila proteins Spitz and Keren. May function in pollen elongation. This chain is RHOMBOID-like protein 2, found in Arabidopsis thaliana (Mouse-ear cress).